The following is a 138-amino-acid chain: Protein NrdI (138 aa).

The protein belongs to the NrdI family.

Functionally, probably involved in ribonucleotide reductase function. The polypeptide is Protein NrdI (Paracoccus denitrificans (strain Pd 1222)).